Reading from the N-terminus, the 257-residue chain is Acetylglutamate kinase (257 aa).

Residues 43–44 (GG), R65, and N157 contribute to the substrate site.

The protein belongs to the acetylglutamate kinase family. ArgB subfamily.

The protein localises to the cytoplasm. It carries out the reaction N-acetyl-L-glutamate + ATP = N-acetyl-L-glutamyl 5-phosphate + ADP. The protein operates within amino-acid biosynthesis; L-arginine biosynthesis; N(2)-acetyl-L-ornithine from L-glutamate: step 2/4. Its function is as follows. Catalyzes the ATP-dependent phosphorylation of N-acetyl-L-glutamate. This Actinobacillus succinogenes (strain ATCC 55618 / DSM 22257 / CCUG 43843 / 130Z) protein is Acetylglutamate kinase.